A 395-amino-acid chain; its full sequence is Guanine nucleotide-binding protein subunit beta-5 (395 aa).

WD repeat units lie at residues 103–142 (GHGNKVLCMDWCKDKRRIVSSSQDGKVIVWDSFTTNKEHA), 145–184 (MPCTWVMACAYAPSGCAIACGGLDNKCSVYPLTFDKNENM), 193–234 (MHTN…QSFH), 236–278 (HGAD…QAFE), 279–318 (THESDVNSVRYYPSGDAFASGSDDATCRLYDLRADREVAI), 320–362 (SKES…RVSI), and 365–394 (GHENRVSTLRVSPDGTAFCSGSWDHTLRVW).

This sequence belongs to the WD repeat G protein beta family. In terms of assembly, component of a complex composed of RGS9 (isoform RGS9-1), GNB5 and RGS9BP; within this complex, the presence of GNB5 stabilizes both itself and RGS9 and increases RGS9 GTPase-activating protein (GAP) activity. Interacts with RGS7, forming the RGS7-GNB5 complex; within this complex, the presence of GNB5 increases RGS7 GTPase-activating protein (GAP) activity. Interacts with GPR158; promotes the GTPase activator activity of the RGS7-GNB5 complex in absence of glycine, in contrast GTPase activator activity of the RGS7-GNB5 complex is inhibited in presence of glycine. Interacts with RGS6. Isoform 1 is only detected in retina. Isoform 2 is detected in brain (at protein level). Isoform 2 is detected in brain.

Its subcellular location is the membrane. Enhances GTPase-activating protein (GAP) activity of regulator of G protein signaling (RGS) proteins, such as RGS7 and RGS9, hence involved in the termination of the signaling initiated by the G protein coupled receptors (GPCRs) by accelerating the GTP hydrolysis on the G-alpha subunits, thereby promoting their inactivation. Increases RGS7 GTPase-activating protein (GAP) activity, thereby regulating mood and cognition. Increases RGS9 GTPase-activating protein (GAP) activity, hence contributes to the deactivation of G protein signaling initiated by D(2) dopamine receptors. May play an important role in neuronal signaling, including in the parasympathetic, but not sympathetic, control of heart rate. The sequence is that of Guanine nucleotide-binding protein subunit beta-5 (Gnb5) from Mus musculus (Mouse).